An 819-amino-acid polypeptide reads, in one-letter code: Putative U-box domain-containing protein 53 (819 aa).

Disordered regions lie at residues 208 to 309 (TSDT…NPQF) and 398 to 433 (KETE…KEKL). Residues 223–237 (ERTSSSCSSGSGANS) are compositionally biased toward low complexity. The span at 238-260 (DVMSNALKSNPHTLSNKRMQNLP) shows a compositional bias: polar residues. The segment covering 278–296 (DETKKRSSDAAEEASKRSS) has biased composition (basic and acidic residues). Residues 297–307 (PETSRSVSWNP) are compositionally biased toward polar residues. Positions 395-437 (IAKKETEKFEQKRREEREAAQRREAEMKATHEAKEKEKLEESS) form a coiled coil. One can recognise a Protein kinase domain in the interval 460–728 (FSEDLKIGMG…DLEDQILPVL (269 aa)). Residues 466 to 474 (IGMGAYGDV) and K487 each bind ATP. D582 functions as the Proton acceptor in the catalytic mechanism. One can recognise a U-box domain in the interval 748 to 819 (QPPSHFFCPL…AIVEWRNRNQ (72 aa)).

Belongs to the protein kinase superfamily. Ser/Thr protein kinase family.

The catalysed reaction is L-seryl-[protein] + ATP = O-phospho-L-seryl-[protein] + ADP + H(+). It catalyses the reaction L-threonyl-[protein] + ATP = O-phospho-L-threonyl-[protein] + ADP + H(+). The enzyme catalyses S-ubiquitinyl-[E2 ubiquitin-conjugating enzyme]-L-cysteine + [acceptor protein]-L-lysine = [E2 ubiquitin-conjugating enzyme]-L-cysteine + N(6)-ubiquitinyl-[acceptor protein]-L-lysine.. It participates in protein modification; protein ubiquitination. Its function is as follows. Functions as an E3 ubiquitin ligase. In Arabidopsis thaliana (Mouse-ear cress), this protein is Putative U-box domain-containing protein 53 (PUB53).